A 558-amino-acid polypeptide reads, in one-letter code: Dihydroxy-acid dehydratase (558 aa).

D81 is a Mg(2+) binding site. Residue C122 participates in [2Fe-2S] cluster binding. Mg(2+) is bound by residues D123 and K124. K124 is modified (N6-carboxylysine). Residue C195 coordinates [2Fe-2S] cluster. E447 serves as a coordination point for Mg(2+). Residue S473 is the Proton acceptor of the active site.

The protein belongs to the IlvD/Edd family. As to quaternary structure, homodimer. The cofactor is [2Fe-2S] cluster. Requires Mg(2+) as cofactor.

It catalyses the reaction (2R)-2,3-dihydroxy-3-methylbutanoate = 3-methyl-2-oxobutanoate + H2O. The enzyme catalyses (2R,3R)-2,3-dihydroxy-3-methylpentanoate = (S)-3-methyl-2-oxopentanoate + H2O. It participates in amino-acid biosynthesis; L-isoleucine biosynthesis; L-isoleucine from 2-oxobutanoate: step 3/4. It functions in the pathway amino-acid biosynthesis; L-valine biosynthesis; L-valine from pyruvate: step 3/4. Its function is as follows. Functions in the biosynthesis of branched-chain amino acids. Catalyzes the dehydration of (2R,3R)-2,3-dihydroxy-3-methylpentanoate (2,3-dihydroxy-3-methylvalerate) into 2-oxo-3-methylpentanoate (2-oxo-3-methylvalerate) and of (2R)-2,3-dihydroxy-3-methylbutanoate (2,3-dihydroxyisovalerate) into 2-oxo-3-methylbutanoate (2-oxoisovalerate), the penultimate precursor to L-isoleucine and L-valine, respectively. This chain is Dihydroxy-acid dehydratase, found in Bacillus subtilis (strain 168).